Here is a 38-residue protein sequence, read N- to C-terminus: Large ribosomal subunit protein bL36 (38 aa).

This sequence belongs to the bacterial ribosomal protein bL36 family.

The protein is Large ribosomal subunit protein bL36 of Buchnera aphidicola subsp. Schizaphis graminum (strain Sg).